We begin with the raw amino-acid sequence, 368 residues long: UPF0284 protein Tery_1555 (368 aa).

This sequence belongs to the UPF0284 family.

In Trichodesmium erythraeum (strain IMS101), this protein is UPF0284 protein Tery_1555.